The sequence spans 239 residues: MGRKWNNIKDKKASKDANTSRIYAKFGREIYVAAKQGEPDPESNQALRVVLERAKTYNVPRTIIDRAVEKAKGGSEENYDELRYEGFGPNGAMVIVDTLTNNVNRTAADVRAAFSKNSGNMGVNGSVAYMFDATAVIGLEGKTSDEVLEILMEADVDARDILEEEDAVIVYAEPDQFHAVQSALKDAGVEEFTVAELTMLAQNDVTLPEDAQAQFEKMVDALEDLEDVQQVYHNVDLGE.

Belongs to the TACO1 family. YeeN subfamily.

It is found in the cytoplasm. This Bacillus anthracis (strain A0248) protein is Probable transcriptional regulatory protein BAA_0622.